The chain runs to 559 residues: Probable alpha-(1-&gt;6)-mannopyranosyltransferase MSMEG_3120/MSMEI_3041 (559 aa).

Transmembrane regions (helical) follow at residues 41 to 61 (FGAT…ARPV), 81 to 101 (VSLT…LMLG), 202 to 222 (IVEA…LIVW), 247 to 267 (LLFM…GLML), 300 to 316 (WQPM…IAMS), 321 to 340 (LPSL…RWGG), 355 to 375 (ISLA…GWLF), 386 to 406 (WMSP…LLGL), 419 to 439 (AIGV…VLRG), 455 to 475 (VLLF…PLAA), 480 to 500 (PGFR…GPTA), and 507 to 527 (LFQI…LIAL). A compositionally biased stretch (pro residues) spans 535 to 548 (RPAPEPPARPPEQP). The tract at residues 535–559 (RPAPEPPARPPEQPAPADDAYAESP) is disordered.

This sequence belongs to the MptA/B family.

Its subcellular location is the membrane. Catalyzes the addition of alpha-(1-&gt;6)-mannose residue. In Mycolicibacterium smegmatis (strain ATCC 700084 / mc(2)155) (Mycobacterium smegmatis), this protein is Probable alpha-(1-&gt;6)-mannopyranosyltransferase MSMEG_3120/MSMEI_3041.